Here is a 462-residue protein sequence, read N- to C-terminus: Kinetochore protein nsk1 (462 aa).

Residues 104-120 show a composition bias toward polar residues; the sequence is PSKNHETSLSPSKSTID. Disordered stretches follow at residues 104-161, 180-240, and 320-462; these read PSKN…CPGI, EKYG…PLRT, and NQLF…NIQS. The segment covering 121-138 has biased composition (basic and acidic residues); that stretch reads NNERKLDNEIDNYKHDVK. Residues 146-156 show a composition bias toward polar residues; sequence GKTSNPSQGTT. A compositionally biased stretch (basic and acidic residues) spans 180–189; that stretch reads EKYGKTDLGK. Residues 229–240 show a composition bias toward polar residues; the sequence is KNRSSTFSPLRT. A compositionally biased stretch (basic and acidic residues) spans 324-333; that stretch reads KSEEEKDPVG. The span at 422-444 shows a compositional bias: polar residues; the sequence is WPQNLAKNNINSEPNTPTKSNID. Basic residues predominate over residues 449-462; that stretch reads HSARAHKTRKNIQS.

In terms of assembly, interacts with dlc1. The dlc1-nsk1 complex seems to oligomerize in chain-like structures. Also binds directly to spindle microtubules. Phosphorylated by cdk1 at prometaphase arrest. Phosphorylation prevents nsk1 kinetochore and spindle targeting. Dephosphorylated by clp1 at anaphase onset controls its relocalization.

The protein localises to the nucleus. It localises to the nucleolus. The protein resides in the cytoplasm. It is found in the cytoskeleton. Its subcellular location is the spindle. The protein localises to the chromosome. It localises to the centromere. The protein resides in the kinetochore. Functionally, ensures chromosome alignment and accurate chromosome segregation during mitosis. Promotes proper kinetochore-microtubule (k-MT) interactions during anaphase B. The phosphorylation status of nsk1 affects the proper k-MT coupling, ensuring that it interacts stably only at the correct time during mitosis. In Schizosaccharomyces pombe (strain 972 / ATCC 24843) (Fission yeast), this protein is Kinetochore protein nsk1 (nsk1).